Reading from the N-terminus, the 76-residue chain is Small ribosomal subunit protein bS21C (76 aa).

The disordered stretch occupies residues 52–76 (GRQRKLARKQMQREGLLPTKPRKDK).

The protein belongs to the bacterial ribosomal protein bS21 family.

The protein is Small ribosomal subunit protein bS21C (rpsU3) of Agrobacterium fabrum (strain C58 / ATCC 33970) (Agrobacterium tumefaciens (strain C58)).